The sequence spans 295 residues: Caffeine dehydrogenase subunit beta (295 aa).

The FAD-binding PCMH-type domain occupies 1 to 178; sequence MKPTAFDYIR…CEIRIPVPSQ (178 aa). Residues 32 to 36 and 111 to 115 contribute to the FAD site; these read AGGQS and TLGGN.

As to quaternary structure, heterotrimer composed of an alpha (CdhA), a beta (CdhB) and a gamma (CdhC) subunit.

It catalyses the reaction caffeine + a ubiquinone + H2O = 1,3,7-trimethylurate + a ubiquinol. It carries out the reaction ubiquinone-0 + caffeine + H2O = ubiquinol-0 + 1,3,7-trimethylurate. The catalysed reaction is theobromine + a ubiquinone + H2O = 3,7-dimethylurate + a ubiquinol. Component of the caffeine dehydrogenase complex that catalyzes the hydrolytical oxidation of 1,3,7-trimethylxanthine (caffeine) by incorporation of an oxygen atom originating from a water molecule into position C-8 to produce 1,3,7-trimethyluric acid (TMU). Coenzyme Q0 (ubiquinone-0) is the preferred electron acceptor and, to a lesser extent, coenzyme Q2 (ubiquinone-2) can also be used, but oxygen and NAD(P)(+) cannot. Is involved in a caffeine degradation pathway that allows Pseudomonas sp. strain CBB1 to grow on caffeine as the sole carbon and nitrogen source. Is also active with theobromine as substrate, but shows a very poor activity with theophylline and is not active with xanthine, 3-methylxanthine, 7-methylxanthine, TMU, and 3,7-dimethylurate. This is Caffeine dehydrogenase subunit beta from Pseudomonas sp. (strain CBB1).